The chain runs to 249 residues: MAAGSTIDALGQFELHPVLGHLGEALRFSQSPLFMLIAAAVVLVFLYVGMRPAAVVPGRLQAAAEISYDFVHDLAVSTIGENGATFFPFVFAIFFFILAGNYLGLLPFSFTYTSHIAVTFGLAIMVFIISILASIRFQGVGFLKHFLPAGTPVWLAPLLVPIEIISFLSRPVSLSIRLFANMVAGHVLLEVFAGFTIMLAGLGAFGHVLAIAPIAINIALTALELLVGVLQAYVFAILTCIYLREAVAH.

6 consecutive transmembrane segments (helical) span residues 30–50 (QSPL…YVGM), 86–106 (FFPF…LGLL), 115–135 (HIAV…LASI), 146–166 (FLPA…EIIS), 191–211 (VFAG…VLAI), and 218–238 (IALT…FAIL).

This sequence belongs to the ATPase A chain family. As to quaternary structure, F-type ATPases have 2 components, CF(1) - the catalytic core - and CF(0) - the membrane proton channel. CF(1) has five subunits: alpha(3), beta(3), gamma(1), delta(1), epsilon(1). CF(0) has three main subunits: a(1), b(2) and c(9-12). The alpha and beta chains form an alternating ring which encloses part of the gamma chain. CF(1) is attached to CF(0) by a central stalk formed by the gamma and epsilon chains, while a peripheral stalk is formed by the delta and b chains.

Its subcellular location is the cell inner membrane. Key component of the proton channel; it plays a direct role in the translocation of protons across the membrane. The protein is ATP synthase subunit a of Gluconobacter oxydans (strain 621H) (Gluconobacter suboxydans).